A 427-amino-acid polypeptide reads, in one-letter code: Tumor necrosis factor receptor superfamily member 16 (427 aa).

Residues 1-31 (MRRAGAACSAMDRLRLLLLLLLLLGVSFGGA) form the signal peptide. Over 32-254 (KETCSTGMYT…VVTRGTADNL (223 aa)) the chain is Extracellular. TNFR-Cys repeat units lie at residues 34 to 67 (TCST…QTVC), 69 to 110 (PCLD…DAVC), 111 to 149 (RCSY…NTVC), and 151 to 191 (ECPE…DAEC). 12 cysteine pairs are disulfide-bonded: Cys-35–Cys-46, Cys-47–Cys-60, Cys-50–Cys-67, Cys-70–Cys-86, Cys-89–Cys-102, Cys-92–Cys-110, Cys-112–Cys-125, Cys-128–Cys-141, Cys-131–Cys-149, Cys-152–Cys-167, Cys-170–Cys-183, and Cys-173–Cys-191. Asn-63 carries an N-linked (GlcNAc...) asparagine glycan. Residues 197-223 (RWITRSTPPEGSDVTTPSTQEPEAPPE) are disordered. The span at 200–217 (TRSTPPEGSDVTTPSTQE) shows a compositional bias: polar residues. The chain crosses the membrane as a helical span at residues 255–275 (IPVYCSILAAVVVGLVAYIAF). Over 276–427 (KRWNSCKQNK…CSESTATSPV (152 aa)) the chain is Cytoplasmic. Polar residues-rich tracts occupy residues 284-294 (NKQGANSRPVN) and 308-329 (SGIS…TASG). The tract at residues 284-334 (NKQGANSRPVNQTPPPEGEKLHSDSGISVDSQSLHDQQTHTQTASGQALKG) is disordered. Ser-314 carries the phosphoserine modification. A mediates interaction with KIDINS220 region spans residues 329–344 (GQALKGDGNLYSSLPL). Residues 356 to 421 (GDTWRHLAGE…DIVESLCSES (66 aa)) form the Death domain.

As to quaternary structure, homodimer; disulfide-linked. Heterodimer with SORCS2. The extracellular domains of the heterodimer bind NGF. The cytoplasmic region of the heterodimer binds TRIO. NGF binding mediates dissociation of TRIO from the receptor complex. Interacts with TRAF2, TRAF4, TRAF6, PTPN13 and RANBP9. Interacts through TRAF6 with SQSTM1 which bridges NGFR to NTRK1. Interacts with BEX1. Interacts with BEX3. Interacts with KIDINS220 and NTRK1. Can form a ternary complex with NTRK1 and KIDINS220 and this complex is affected by the expression levels of KIDINS220. An increase in KIDINS220 expression leads to a decreased association of NGFR and NTRK1. Interacts (via death domain) with RAB31. Interacts with NTRK2; may regulate the ligand specificity of the NTRK2 receptor. Interacts with LINGO1. Interacts with NRADD. Interacts with MAGED1; the interaction antagonizes the association NGFR:NTRK1. Interacts with RTN4R. Interacts (via death domain) with ARHGDIA and RIPK2. Interacts with BFAR. (Microbial infection) Binds to rabies virus glycoprotein Gs. Post-translationally, N-glycosylated. O-glycosylated. In terms of processing, phosphorylated on serine residues. In terms of tissue distribution, detected in Schwann cells. Detected in embryonic brain, in hippocampus neurons (at protein level). Detected in brain and spinal cord.

The protein localises to the cell membrane. Its subcellular location is the cytoplasm. The protein resides in the perikaryon. It is found in the cell projection. It localises to the growth cone. The protein localises to the dendritic spine. Low affinity neurotrophin receptor which can bind to mature NGF, BDNF, NTF3, and NTF4. Forms a heterodimeric receptor with SORCS2 that binds the precursor forms of NGF (proNGF), BDNF (proBDNF) and NTF3 (proNT3) with high affinity, and has much lower affinity for mature NGF and BDNF. Plays an important role in differentiation and survival of specific neuronal populations during development. Can mediate cell survival as well as cell death of neural cells. The heterodimeric receptor formed with SORCS2 plays a role in proBDNF-dependent synaptic plasticity, in hippocampal long term depression (LTD) and long term potentiation (LTP). Plays a role in the inactivation of RHOA. Plays a role in the regulation of the translocation of GLUT4 to the cell surface in adipocytes and skeletal muscle cells in response to insulin, probably by regulating RAB31 activity, and thereby contributes to the regulation of insulin-dependent glucose uptake. Necessary for the circadian oscillation of the clock genes BMAL1, PER1, PER2 and NR1D1 in the suprachiasmatic nucleus (SCN) of the brain and in liver and of the genes involved in glucose and lipid metabolism in the liver. Functionally, (Microbial infection) Cell surface receptor for rabies virus glycoprotein Gs. In terms of biological role, does not bind NGF, BDNF, NTF3, and NTF4. The chain is Tumor necrosis factor receptor superfamily member 16 (Ngfr) from Mus musculus (Mouse).